The primary structure comprises 608 residues: Fatty acid amide hydrolase (608 aa).

Residues Lys206 and Ser282 each act as charge relay system in the active site. 303–306 contacts substrate; the sequence is GGGS. Ser306 acts as the Acyl-ester intermediate in catalysis.

This sequence belongs to the amidase family. As to quaternary structure, forms homodimers.

It is found in the endoplasmic reticulum membrane. The protein localises to the cell membrane. It catalyses the reaction N-(9Z,12Z-octadecadienoyl)-ethanolamine + H2O = ethanolamine + (9Z,12Z)-octadecadienoate. The catalysed reaction is N-hexadecanoylethanolamine + H2O = ethanolamine + hexadecanoate. It carries out the reaction N-dodecanoylethanolamine + H2O = dodecanoate + ethanolamine. With respect to regulation, inhibited by methyl arachidonyl fluorophosphonate (MAFP). Catalyzes the hydrolysis of bioactive endogenous fatty acid amides to their corresponding acids. The hydrolysis of endogenous amidated lipids terminates their participation as lipid mediators in various signaling systems. Converts a wide range of N-acylethanolamines (NAEs) to their corresponding free fatty acids and ethanolamine. This is Fatty acid amide hydrolase from Oryza sativa subsp. indica (Rice).